The primary structure comprises 548 residues: Membrane protein insertase YidC (548 aa).

The chain crosses the membrane as a helical span at residues 6 to 26; that stretch reads NLLVIALLFVSFMIWQAWEQD. Residues 28 to 56 are disordered; it reads NPQPQTQQTTQTTTTAAGSAADQGVPASG. A compositionally biased stretch (low complexity) spans 29–42; the sequence is PQPQTQQTTQTTTT. The next 4 helical transmembrane spans lie at 350–370, 424–444, 458–478, and 499–519; these read FVGN…GIMY, FPLI…MGSI, LSAQ…MFFI, and PVIF…YYIV.

It belongs to the OXA1/ALB3/YidC family. Type 1 subfamily. As to quaternary structure, interacts with the Sec translocase complex via SecD. Specifically interacts with transmembrane segments of nascent integral membrane proteins during membrane integration.

The protein resides in the cell inner membrane. Required for the insertion and/or proper folding and/or complex formation of integral membrane proteins into the membrane. Involved in integration of membrane proteins that insert both dependently and independently of the Sec translocase complex, as well as at least some lipoproteins. Aids folding of multispanning membrane proteins. The polypeptide is Membrane protein insertase YidC (Salmonella paratyphi C (strain RKS4594)).